Here is a 317-residue protein sequence, read N- to C-terminus: Melanocyte-stimulating hormone receptor (317 aa).

Residues 1-37 (MPIHGAPRKLLGSLNSTPTATPKLGLAANHTGAPCLE) lie on the Extracellular side of the membrane. Asparagine 29 carries N-linked (GlcNAc...) asparagine glycosylation. A helical membrane pass occupies residues 38-63 (VSIPDGLFLSLGLVSLVENVLVVAAI). Residues 64–72 (AKNRNLHSP) are Cytoplasmic-facing. A helical transmembrane segment spans residues 73–93 (MYCFICCLALSDLLVSGSNML). Residues 94-118 (EMAVVLLLEGGALATRASVVQQLHN) lie on the Extracellular side of the membrane. The helical transmembrane segment at 119–140 (TIDVLTCSSMLCSLCFLGAIAV) threads the bilayer. Residues 141 to 163 (DRHISIFYALRYHSIMTLPRAQR) lie on the Cytoplasmic side of the membrane. A helical membrane pass occupies residues 164–183 (VIAAIWVASILSSTLFITYY). Residues 184–191 (DHAAVLLC) are Extracellular-facing. Residues 192-211 (LVVFFLAMLVLMAVLYVHML) form a helical membrane-spanning segment. Residues 212 to 240 (ARACQHAQGITRLHKRQPPAHQGFGLRGA) are Cytoplasmic-facing. The chain crosses the membrane as a helical span at residues 241–266 (ATLTILLGIFFLCWGPFFLHLKLVVF). Residues 267-279 (CPQHLTCSCIFKN) lie on the Extracellular side of the membrane. The helical transmembrane segment at 280–300 (FKVFLTLIICNTIIDPLIYAF) threads the bilayer. The Cytoplasmic portion of the chain corresponds to 301-317 (RSQELRRTLKEVLLCSW). Residue cysteine 315 is the site of S-palmitoyl cysteine attachment.

It belongs to the G-protein coupled receptor 1 family. In terms of assembly, interacts with MGRN1, but does not undergo MGRN1-mediated ubiquitination; this interaction competes with GNAS-binding and thus inhibits agonist-induced cAMP production. Interacts with OPN3; the interaction results in a decrease in MC1R-mediated cAMP signaling and ultimately a decrease in melanin production in melanocytes.

It is found in the cell membrane. Receptor for MSH (alpha, beta and gamma) and ACTH. The activity of this receptor is mediated by G proteins which activate adenylate cyclase. Mediates melanogenesis, the production of eumelanin (black/brown) and phaeomelanin (red/yellow), via regulation of cAMP signaling in melanocytes. This Saimiri oerstedii (Central American squirrel monkey) protein is Melanocyte-stimulating hormone receptor (MC1R).